We begin with the raw amino-acid sequence, 490 residues long: ATP synthase subunit beta, chloroplastic (490 aa).

169 to 176 lines the ATP pocket; it reads GGAGVGKT.

The protein belongs to the ATPase alpha/beta chains family. F-type ATPases have 2 components, CF(1) - the catalytic core - and CF(0) - the membrane proton channel. CF(1) has five subunits: alpha(3), beta(3), gamma(1), delta(1), epsilon(1). CF(0) has four main subunits: a(1), b(1), b'(1) and c(9-12).

The protein resides in the plastid. It is found in the chloroplast thylakoid membrane. The catalysed reaction is ATP + H2O + 4 H(+)(in) = ADP + phosphate + 5 H(+)(out). Produces ATP from ADP in the presence of a proton gradient across the membrane. The catalytic sites are hosted primarily by the beta subunits. In Cyanidium caldarium (Red alga), this protein is ATP synthase subunit beta, chloroplastic.